The following is a 202-amino-acid chain: Holliday junction branch migration complex subunit RuvA (202 aa).

Residues methionine 1–alanine 65 form a domain I region. The segment at threonine 66 to leucine 144 is domain II. The tract at residues valine 145–arginine 155 is flexible linker. The domain III stretch occupies residues arginine 155 to arginine 202.

It belongs to the RuvA family. As to quaternary structure, homotetramer. Forms an RuvA(8)-RuvB(12)-Holliday junction (HJ) complex. HJ DNA is sandwiched between 2 RuvA tetramers; dsDNA enters through RuvA and exits via RuvB. An RuvB hexamer assembles on each DNA strand where it exits the tetramer. Each RuvB hexamer is contacted by two RuvA subunits (via domain III) on 2 adjacent RuvB subunits; this complex drives branch migration. In the full resolvosome a probable DNA-RuvA(4)-RuvB(12)-RuvC(2) complex forms which resolves the HJ.

The protein localises to the cytoplasm. In terms of biological role, the RuvA-RuvB-RuvC complex processes Holliday junction (HJ) DNA during genetic recombination and DNA repair, while the RuvA-RuvB complex plays an important role in the rescue of blocked DNA replication forks via replication fork reversal (RFR). RuvA specifically binds to HJ cruciform DNA, conferring on it an open structure. The RuvB hexamer acts as an ATP-dependent pump, pulling dsDNA into and through the RuvAB complex. HJ branch migration allows RuvC to scan DNA until it finds its consensus sequence, where it cleaves and resolves the cruciform DNA. In Nitratidesulfovibrio vulgaris (strain DP4) (Desulfovibrio vulgaris), this protein is Holliday junction branch migration complex subunit RuvA.